The sequence spans 267 residues: MFNLKKQPSDKLFVPFITAGDPLPEISIELAKSLQEAGASALELGVPYSDPLADGPVIQRASKRALDNDMNIVKAIRLGGEMKKNGVHIPIILFTYYNPVLQLDTDHFFALLRQNQLDGLLVPDLPFEESVYLQQQCKKHGITYISLVAPTSESRIQKITQQAEGFVYCVSSLGVTGVRNEFEDSVSSFIRSVKGMSSVPVAVGFGISSSKQVEMMNELADGVVVGSALVRKIEELKDELVAPETREQALKAFEAYAKTFSGSYMVK.

Active-site proton acceptor residues include Glu43 and Asp54.

This sequence belongs to the TrpA family. As to quaternary structure, tetramer of two alpha and two beta chains.

It catalyses the reaction (1S,2R)-1-C-(indol-3-yl)glycerol 3-phosphate + L-serine = D-glyceraldehyde 3-phosphate + L-tryptophan + H2O. The protein operates within amino-acid biosynthesis; L-tryptophan biosynthesis; L-tryptophan from chorismate: step 5/5. Its function is as follows. The alpha subunit is responsible for the aldol cleavage of indoleglycerol phosphate to indole and glyceraldehyde 3-phosphate. This Bacillus licheniformis (strain ATCC 14580 / DSM 13 / JCM 2505 / CCUG 7422 / NBRC 12200 / NCIMB 9375 / NCTC 10341 / NRRL NRS-1264 / Gibson 46) protein is Tryptophan synthase alpha chain.